The following is a 369-amino-acid chain: 4beta-methylsterol monooxygenase (369 aa).

Residues tryptophan 29–leucine 135 enclose the Rieske domain. [2Fe-2S] cluster-binding residues include cysteine 70, histidine 72, cysteine 89, and histidine 92.

The cofactor is [2Fe-2S] cluster.

The catalysed reaction is a 3beta-hydroxy-4,4-dimethylsteroid + 3 NADH + 3 O2 + 2 H(+) = a 3beta-hydroxy-4alpha-methylsteroid-4beta-carboxylate + 3 NAD(+) + 4 H2O. It catalyses the reaction 4,4-dimethyl-5alpha-cholesta-8,24-dien-3beta-ol + 3 NADH + 3 O2 + 2 H(+) = 4beta-carboxy-4alpha-methyl-5alpha-cholesta-8,24-dien-3beta-ol + 3 NAD(+) + 4 H2O. The enzyme catalyses a 3beta-hydroxy-4,4-dimethylsteroid + NADH + O2 + H(+) = a 3beta-hydroxy-4beta-hydroxymethyl-4alpha-methylsteroid + NAD(+) + H2O. It carries out the reaction a 3beta-hydroxy-4beta-hydroxymethyl-4alpha-methylsteroid + NADH + O2 + H(+) = a 3beta-hydroxy-4beta-formyl-4alpha-methylsteroid + NAD(+) + 2 H2O. The catalysed reaction is a 3beta-hydroxy-4beta-formyl-4alpha-methylsteroid + NADH + O2 = a 3beta-hydroxy-4alpha-methylsteroid-4beta-carboxylate + NAD(+) + H2O. It catalyses the reaction 4,4-dimethyl-5alpha-cholesta-8,24-dien-3beta-ol + NADH + O2 + H(+) = 4beta-hydroxymethyl-4alpha-methylzymosterol + NAD(+) + H2O. The enzyme catalyses 4beta-hydroxymethyl-4alpha-methylzymosterol + NADH + O2 + H(+) = 4beta-formylmethyl-4alpha-methyl-5alpha-cholesta-8,24-dien-3beta-ol + NAD(+) + 2 H2O. It carries out the reaction 4beta-formylmethyl-4alpha-methyl-5alpha-cholesta-8,24-dien-3beta-ol + NADH + O2 = 4beta-carboxy-4alpha-methyl-5alpha-cholesta-8,24-dien-3beta-ol + NAD(+) + H2O. It functions in the pathway steroid biosynthesis; sterol biosynthesis. Its function is as follows. Participates in the biosynthesis of bacterial sterols. Together with SdmB, removes one methyl group from the C-4 position of 4,4-dimethylated steroid molecules. SdmA oxidizes the sterol 4beta-methyl group into first a hydroxyl, then an aldehyde and finally a carboxylic acid group. The protein is 4beta-methylsterol monooxygenase of Methylococcus capsulatus (strain ATCC 33009 / NCIMB 11132 / Bath).